The primary structure comprises 245 residues: 1-(5-phosphoribosyl)-5-[(5-phosphoribosylamino)methylideneamino] imidazole-4-carboxamide isomerase (245 aa).

Aspartate 7 serves as the catalytic Proton acceptor. Aspartate 129 functions as the Proton donor in the catalytic mechanism.

The protein belongs to the HisA/HisF family.

The protein localises to the cytoplasm. It carries out the reaction 1-(5-phospho-beta-D-ribosyl)-5-[(5-phospho-beta-D-ribosylamino)methylideneamino]imidazole-4-carboxamide = 5-[(5-phospho-1-deoxy-D-ribulos-1-ylimino)methylamino]-1-(5-phospho-beta-D-ribosyl)imidazole-4-carboxamide. The protein operates within amino-acid biosynthesis; L-histidine biosynthesis; L-histidine from 5-phospho-alpha-D-ribose 1-diphosphate: step 4/9. The sequence is that of 1-(5-phosphoribosyl)-5-[(5-phosphoribosylamino)methylideneamino] imidazole-4-carboxamide isomerase from Shewanella putrefaciens (strain CN-32 / ATCC BAA-453).